The following is a 275-amino-acid chain: Hydroxyethylthiazole kinase (275 aa).

Substrate is bound at residue Met50. Arg126 and Ser171 together coordinate ATP. Substrate is bound at residue Ala200.

It belongs to the Thz kinase family. It depends on Mg(2+) as a cofactor.

The enzyme catalyses 5-(2-hydroxyethyl)-4-methylthiazole + ATP = 4-methyl-5-(2-phosphooxyethyl)-thiazole + ADP + H(+). It functions in the pathway cofactor biosynthesis; thiamine diphosphate biosynthesis; 4-methyl-5-(2-phosphoethyl)-thiazole from 5-(2-hydroxyethyl)-4-methylthiazole: step 1/1. Its function is as follows. Catalyzes the phosphorylation of the hydroxyl group of 4-methyl-5-beta-hydroxyethylthiazole (THZ). This is Hydroxyethylthiazole kinase from Acinetobacter baumannii (strain AB307-0294).